Consider the following 530-residue polypeptide: 3-oxo-5-alpha-steroid 4-dehydrogenase (530 aa).

33 to 62 (DVVVVGWGGAGASAAIEAREQGAEVLVIER) provides a ligand contact to FAD. Residues 395 to 415 (AWQCLFGGLWAFQSMPALALM) traverse the membrane as a helical segment.

The protein belongs to the FAD-dependent oxidoreductase 2 family. FAD is required as a cofactor.

It localises to the membrane. It carries out the reaction a 3-oxo-5alpha-steroid + A = a 3-oxo-Delta(4)-steroid + AH2. The catalysed reaction is 5alpha-androstan-3,17-dione + A = androst-4-ene-3,17-dione + AH2. The enzyme catalyses 5alpha-androst-1-ene-3,17-dione + A = androsta-1,4-diene-3,17-dione + AH2. Inhibition occurs with substrate concentrations above 25 uM. Involved in the degradation of steroids having an A:B ring fusion in a trans configuration. Catalyzes the elimination of hydrogens located at positions 4 and 5 and the introduction of double bonds into ring A. The sequence is that of 3-oxo-5-alpha-steroid 4-dehydrogenase from Comamonas testosteroni (Pseudomonas testosteroni).